The chain runs to 151 residues: Ribosomal RNA large subunit methyltransferase H (151 aa).

S-adenosyl-L-methionine is bound by residues Gly100 and 119-124; that span reads LSRMTF.

It belongs to the RNA methyltransferase RlmH family. As to quaternary structure, homodimer.

It is found in the cytoplasm. The enzyme catalyses pseudouridine(1915) in 23S rRNA + S-adenosyl-L-methionine = N(3)-methylpseudouridine(1915) in 23S rRNA + S-adenosyl-L-homocysteine + H(+). Its function is as follows. Specifically methylates the pseudouridine at position 1915 (m3Psi1915) in 23S rRNA. The sequence is that of Ribosomal RNA large subunit methyltransferase H from Thermotoga neapolitana (strain ATCC 49049 / DSM 4359 / NBRC 107923 / NS-E).